A 162-amino-acid chain; its full sequence is Neuritin-like protein (162 aa).

A signal peptide spans 1-32 (MMCNCCHCHWRRRCQRLPCALTLLLLLPLAVA). Alanine 136 carries GPI-anchor amidated alanine lipidation. Residues 137 to 162 (PALAPAPAPVLLAAALALACLLGPLA) constitute a propeptide, removed in mature form.

It belongs to the neuritin family.

It is found in the cell membrane. In Mus musculus (Mouse), this protein is Neuritin-like protein (Nrn1l).